The chain runs to 471 residues: Argininosuccinate lyase (471 aa).

The protein belongs to the lyase 1 family. Argininosuccinate lyase subfamily.

It is found in the cytoplasm. It carries out the reaction 2-(N(omega)-L-arginino)succinate = fumarate + L-arginine. The protein operates within amino-acid biosynthesis; L-arginine biosynthesis; L-arginine from L-ornithine and carbamoyl phosphate: step 3/3. This chain is Argininosuccinate lyase, found in Acidiphilium cryptum (strain JF-5).